A 946-amino-acid polypeptide reads, in one-letter code: Protein translocase subunit SecA (946 aa).

ATP contacts are provided by residues glutamine 89, 107–111, and aspartate 508; that span reads GEGKT. The disordered stretch occupies residues 534-569; it reads PEDSHKPPVPLQRRKDSSVGFGKEENNSKDKKVNHS. Residues 546–569 are compositionally biased toward basic and acidic residues; sequence RRKDSSVGFGKEENNSKDKKVNHS.

Belongs to the SecA family. Monomer and homodimer. Part of the essential Sec protein translocation apparatus which comprises SecA, SecYEG and auxiliary proteins SecDF. Other proteins may also be involved.

The protein localises to the cell inner membrane. The protein resides in the cellular thylakoid membrane. Its subcellular location is the cytoplasm. It carries out the reaction ATP + H2O + cellular proteinSide 1 = ADP + phosphate + cellular proteinSide 2.. Its function is as follows. Part of the Sec protein translocase complex. Interacts with the SecYEG preprotein conducting channel. Has a central role in coupling the hydrolysis of ATP to the transfer of proteins into and across the cell membrane, serving as an ATP-driven molecular motor driving the stepwise translocation of polypeptide chains across the membrane. Probably participates in protein translocation into and across both the cytoplasmic and thylakoid membranes in cyanobacterial cells. The protein is Protein translocase subunit SecA of Prochlorococcus marinus (strain SARG / CCMP1375 / SS120).